Here is a 358-residue protein sequence, read N- to C-terminus: Guanidino acid hydrolase, mitochondrial (358 aa).

Residues 1-36 (MLRLLRSSWARGLGSGVATWRPSAGLFRPGCPGIRQ) constitute a mitochondrion transit peptide. The interval 31 to 56 (CPGIRQASGASDTPHHQSPSSESPVQ) is disordered. The span at 46–56 (HQSPSSESPVQ) shows a compositional bias: low complexity. Residues Gln168 and His193 each contribute to the Mn(2+) site. Lys199 is modified (N6-acetyllysine). The residue at position 223 (Lys223) is an N6-acetyllysine; alternate. Lys223 carries the N6-succinyllysine; alternate modification. Asp284 lines the Mn(2+) pocket.

This sequence belongs to the arginase family. Agmatinase subfamily. It depends on Mn(2+) as a cofactor. In terms of tissue distribution, detected only in liver.

Its subcellular location is the mitochondrion. The enzyme catalyses 3-guanidinopropanoate + H2O = urea + beta-alanine. The catalysed reaction is 4-guanidinobutanoate + H2O = urea + 4-aminobutanoate. It carries out the reaction taurocyamine + H2O = urea + taurine. It catalyses the reaction L-arginine + H2O = urea + L-ornithine. It functions in the pathway nitrogen metabolism; urea cycle; L-ornithine and urea from L-arginine: step 1/1. Hydrolyzes linear guanidino acids to form urea and the corresponding amines. Displays specificity for substrates having a negatively charged head group and short chains including taurocyamine, guanidino propanoic and butanoic acids. May protect cells by detoxifying potentially harmful amounts of guanidino acids. Metabolizes L-arginine with low efficiency. This is Guanidino acid hydrolase, mitochondrial (Agmat) from Mus musculus (Mouse).